The chain runs to 173 residues: Crossover junction endodeoxyribonuclease RuvC (173 aa).

Active-site residues include D10, E71, and D143. Residues D10, E71, and D143 each contribute to the Mg(2+) site.

This sequence belongs to the RuvC family. As to quaternary structure, homodimer which binds Holliday junction (HJ) DNA. The HJ becomes 2-fold symmetrical on binding to RuvC with unstacked arms; it has a different conformation from HJ DNA in complex with RuvA. In the full resolvosome a probable DNA-RuvA(4)-RuvB(12)-RuvC(2) complex forms which resolves the HJ. Mg(2+) serves as cofactor.

The protein resides in the cytoplasm. It carries out the reaction Endonucleolytic cleavage at a junction such as a reciprocal single-stranded crossover between two homologous DNA duplexes (Holliday junction).. Functionally, the RuvA-RuvB-RuvC complex processes Holliday junction (HJ) DNA during genetic recombination and DNA repair. Endonuclease that resolves HJ intermediates. Cleaves cruciform DNA by making single-stranded nicks across the HJ at symmetrical positions within the homologous arms, yielding a 5'-phosphate and a 3'-hydroxyl group; requires a central core of homology in the junction. The consensus cleavage sequence is 5'-(A/T)TT(C/G)-3'. Cleavage occurs on the 3'-side of the TT dinucleotide at the point of strand exchange. HJ branch migration catalyzed by RuvA-RuvB allows RuvC to scan DNA until it finds its consensus sequence, where it cleaves and resolves the cruciform DNA. This chain is Crossover junction endodeoxyribonuclease RuvC, found in Gloeobacter violaceus (strain ATCC 29082 / PCC 7421).